A 67-amino-acid chain; its full sequence is Probable cold shock protein A (67 aa).

In terms of domain architecture, CSD spans 1–66 (MPQGTVKWFN…KGPQATGVRT (66 aa)). Residue K47 forms an Isoglutamyl lysine isopeptide (Lys-Gln) (interchain with Q-Cter in protein Pup) linkage.

It localises to the cytoplasm. This Mycolicibacterium smegmatis (strain ATCC 700084 / mc(2)155) (Mycobacterium smegmatis) protein is Probable cold shock protein A (cspA).